The following is a 141-amino-acid chain: Nucleoside diphosphate kinase (141 aa).

The ATP site is built by lysine 11, phenylalanine 59, arginine 87, threonine 93, arginine 104, and asparagine 114. The Pros-phosphohistidine intermediate role is filled by histidine 117.

The protein belongs to the NDK family. Homotetramer. Mg(2+) is required as a cofactor.

The protein resides in the cytoplasm. It catalyses the reaction a 2'-deoxyribonucleoside 5'-diphosphate + ATP = a 2'-deoxyribonucleoside 5'-triphosphate + ADP. It carries out the reaction a ribonucleoside 5'-diphosphate + ATP = a ribonucleoside 5'-triphosphate + ADP. Functionally, major role in the synthesis of nucleoside triphosphates other than ATP. The ATP gamma phosphate is transferred to the NDP beta phosphate via a ping-pong mechanism, using a phosphorylated active-site intermediate. The sequence is that of Nucleoside diphosphate kinase from Burkholderia thailandensis (strain ATCC 700388 / DSM 13276 / CCUG 48851 / CIP 106301 / E264).